The following is a 447-amino-acid chain: UPF0210 protein LAF_0976 (447 aa).

It belongs to the UPF0210 family. In terms of assembly, homodimer.

The protein is UPF0210 protein LAF_0976 of Limosilactobacillus fermentum (strain NBRC 3956 / LMG 18251) (Lactobacillus fermentum).